Here is a 343-residue protein sequence, read N- to C-terminus: Endoplasmic reticulum-resident calcium binding protein (343 aa).

The first 26 residues, 1–26 (MMKINLYKLLCFICVIFLLHKNVVRS), serve as a signal peptide directing secretion. 5 EF-hand domains span residues 59-94 (GAKE…LKNE), 95-130 (IFLK…NLDA), 135-170 (KHSE…MKDE), 172-207 (LKEL…ESSG), and 210-245 (KDDE…PAHE). Residues Asp72, Asn74, Asp76, Glu78, Glu83, Asp108, Asp110, Asp112, Glu119, Asp148, Asp150, Asp152, Lys154, Glu159, Asp185, Asn187, Asp189, Lys191, Glu196, Asp223, Asn225, Asp227, and Glu234 each coordinate Ca(2+). The segment covering 313–331 (EDDDMDADNTEDDKDEADD) has biased composition (acidic residues). The interval 313–343 (EDDDMDADNTEDDKDEADDASQQKSPAIDEL) is disordered.

It belongs to the CREC family.

Its subcellular location is the endoplasmic reticulum. In terms of biological role, calcium-binding protein. Required for schizont to ring transition. Required for the breakdown of the parasitophorous vacuole membrane during egress. Required for the proteolytic maturation of apical membrane antigen 1 (AMA-1) during egress. Required for the proteolytic maturation of subtilisin-like protease 1 (SUB1) during egress. Required for the proteolytic maturation of plasmepsin X (PMX) during egress. This Plasmodium falciparum (isolate 3D7) protein is Endoplasmic reticulum-resident calcium binding protein.